A 254-amino-acid polypeptide reads, in one-letter code: MDYFAKRIIPCLDVNEGRVVKGVNFVGLRDAGDPVEVAKRYNEEGADEITFLDIGASHEGRDTIVDVVKKVAQEVFIPLTVGGGIRELPDIYNLLNVGCDKVSINSAAIKRPEFIEEGAKRFGSQCIVVAIDAKRVGNGKWHIFTHGGRNDTGIDALQWAKEAYERGAGELLVTSMDADGTKAGFDNELNRKIGELVNIPVIASGGAGTMQHIEEAFTLGNADAALAASIFHFREIDIMELKHYLKTKNIPVRI.

Residues Asp13 and Asp132 contribute to the active site.

This sequence belongs to the HisA/HisF family. Heterodimer of HisH and HisF.

The protein resides in the cytoplasm. It carries out the reaction 5-[(5-phospho-1-deoxy-D-ribulos-1-ylimino)methylamino]-1-(5-phospho-beta-D-ribosyl)imidazole-4-carboxamide + L-glutamine = D-erythro-1-(imidazol-4-yl)glycerol 3-phosphate + 5-amino-1-(5-phospho-beta-D-ribosyl)imidazole-4-carboxamide + L-glutamate + H(+). It participates in amino-acid biosynthesis; L-histidine biosynthesis; L-histidine from 5-phospho-alpha-D-ribose 1-diphosphate: step 5/9. Its function is as follows. IGPS catalyzes the conversion of PRFAR and glutamine to IGP, AICAR and glutamate. The HisF subunit catalyzes the cyclization activity that produces IGP and AICAR from PRFAR using the ammonia provided by the HisH subunit. This chain is Imidazole glycerol phosphate synthase subunit HisF, found in Sulfurovum sp. (strain NBC37-1).